We begin with the raw amino-acid sequence, 511 residues long: ATP synthase subunit alpha (511 aa).

169–176 (GDRQTGKT) contacts ATP.

It belongs to the ATPase alpha/beta chains family. In terms of assembly, F-type ATPases have 2 components, CF(1) - the catalytic core - and CF(0) - the membrane proton channel. CF(1) has five subunits: alpha(3), beta(3), gamma(1), delta(1), epsilon(1). CF(0) has three main subunits: a(1), b(2) and c(9-12). The alpha and beta chains form an alternating ring which encloses part of the gamma chain. CF(1) is attached to CF(0) by a central stalk formed by the gamma and epsilon chains, while a peripheral stalk is formed by the delta and b chains.

It is found in the cell inner membrane. It carries out the reaction ATP + H2O + 4 H(+)(in) = ADP + phosphate + 5 H(+)(out). Its function is as follows. Produces ATP from ADP in the presence of a proton gradient across the membrane. The alpha chain is a regulatory subunit. The sequence is that of ATP synthase subunit alpha from Bartonella tribocorum (strain CIP 105476 / IBS 506).